Here is a 400-residue protein sequence, read N- to C-terminus: Nicotinate phosphoribosyltransferase (400 aa).

The residue at position 220 (H220) is a Phosphohistidine; by autocatalysis.

Belongs to the NAPRTase family. Transiently phosphorylated on a His residue during the reaction cycle. Phosphorylation strongly increases the affinity for substrates and increases the rate of nicotinate D-ribonucleotide production. Dephosphorylation regenerates the low-affinity form of the enzyme, leading to product release.

It catalyses the reaction nicotinate + 5-phospho-alpha-D-ribose 1-diphosphate + ATP + H2O = nicotinate beta-D-ribonucleotide + ADP + phosphate + diphosphate. It functions in the pathway cofactor biosynthesis; NAD(+) biosynthesis; nicotinate D-ribonucleotide from nicotinate: step 1/1. Catalyzes the synthesis of beta-nicotinate D-ribonucleotide from nicotinate and 5-phospho-D-ribose 1-phosphate at the expense of ATP. This Escherichia coli O7:K1 (strain IAI39 / ExPEC) protein is Nicotinate phosphoribosyltransferase.